The primary structure comprises 514 residues: Bifunctional purine biosynthesis protein PurH (514 aa).

In terms of domain architecture, MGS-like spans 1–145 (MIKRALISVS…KNYQDVVVIV (145 aa)).

It belongs to the PurH family.

It catalyses the reaction (6R)-10-formyltetrahydrofolate + 5-amino-1-(5-phospho-beta-D-ribosyl)imidazole-4-carboxamide = 5-formamido-1-(5-phospho-D-ribosyl)imidazole-4-carboxamide + (6S)-5,6,7,8-tetrahydrofolate. The catalysed reaction is IMP + H2O = 5-formamido-1-(5-phospho-D-ribosyl)imidazole-4-carboxamide. It functions in the pathway purine metabolism; IMP biosynthesis via de novo pathway; 5-formamido-1-(5-phospho-D-ribosyl)imidazole-4-carboxamide from 5-amino-1-(5-phospho-D-ribosyl)imidazole-4-carboxamide (10-formyl THF route): step 1/1. Its pathway is purine metabolism; IMP biosynthesis via de novo pathway; IMP from 5-formamido-1-(5-phospho-D-ribosyl)imidazole-4-carboxamide: step 1/1. The sequence is that of Bifunctional purine biosynthesis protein PurH from Acetivibrio thermocellus (strain ATCC 27405 / DSM 1237 / JCM 9322 / NBRC 103400 / NCIMB 10682 / NRRL B-4536 / VPI 7372) (Clostridium thermocellum).